The primary structure comprises 545 residues: Ubiquitin carboxyl-terminal hydrolase 17-like protein C (545 aa).

The USP domain occupies 51–348 (CGLQNTGNSC…NAYVLFYVQQ (298 aa)). Cys-60 functions as the Nucleophile in the catalytic mechanism. His-307 acts as the Proton acceptor in catalysis. Disordered stretches follow at residues 368 to 442 (DPEY…QKLG) and 489 to 539 (WGRD…KQGQ). The span at 374-385 (KKSRRKKHKKKS) shows a compositional bias: basic residues. Composition is skewed to basic and acidic residues over residues 393–404 (EPCKNREKRATK) and 489–505 (WGRD…HNAD). Residues 508–519 (LTSQDPVNTGQL) are compositionally biased toward polar residues. The segment covering 524-537 (GRRRSKKGKNKNKQ) has biased composition (basic residues).

Belongs to the peptidase C19 family. USP17 subfamily. Expressed in T cells.

The protein localises to the nucleus. It is found in the endoplasmic reticulum. The catalysed reaction is Thiol-dependent hydrolysis of ester, thioester, amide, peptide and isopeptide bonds formed by the C-terminal Gly of ubiquitin (a 76-residue protein attached to proteins as an intracellular targeting signal).. Its function is as follows. Deubiquitinating enzyme that removes conjugated ubiquitin from specific proteins to regulate different cellular processes. Important for preimplantation stage embryonic development. In Mus musculus (Mouse), this protein is Ubiquitin carboxyl-terminal hydrolase 17-like protein C.